Here is a 642-residue protein sequence, read N- to C-terminus: Threonine--tRNA ligase (642 aa).

Residues 1–61 enclose the TGS domain; that stretch reads MPIITLPDGS…EEDASLEIIT (61 aa). The segment at 244–535 is catalytic; sequence DHRKIGKQLD…LIEEYAGFFP (292 aa). Zn(2+) contacts are provided by C335, H386, and H512.

The protein belongs to the class-II aminoacyl-tRNA synthetase family. Homodimer. Zn(2+) serves as cofactor.

It localises to the cytoplasm. It catalyses the reaction tRNA(Thr) + L-threonine + ATP = L-threonyl-tRNA(Thr) + AMP + diphosphate + H(+). Catalyzes the attachment of threonine to tRNA(Thr) in a two-step reaction: L-threonine is first activated by ATP to form Thr-AMP and then transferred to the acceptor end of tRNA(Thr). Also edits incorrectly charged L-seryl-tRNA(Thr). This chain is Threonine--tRNA ligase, found in Vibrio vulnificus (strain YJ016).